The following is a 377-amino-acid chain: F-box protein At2g05970 (377 aa).

The F-box domain maps to 8–55 (ASWSELCPDVLRCVFELLSFSDLNRTRSVCSSWHSASRHCVPTQNQIP).

The protein is F-box protein At2g05970 of Arabidopsis thaliana (Mouse-ear cress).